A 176-amino-acid chain; its full sequence is Endoribonuclease YbeY (176 aa).

3 residues coordinate Zn(2+): His-139, His-143, and His-149.

This sequence belongs to the endoribonuclease YbeY family. It depends on Zn(2+) as a cofactor.

The protein resides in the cytoplasm. Single strand-specific metallo-endoribonuclease involved in late-stage 70S ribosome quality control and in maturation of the 3' terminus of the 16S rRNA. This is Endoribonuclease YbeY from Acaryochloris marina (strain MBIC 11017).